The sequence spans 353 residues: Putative glutamine synthetase (353 aa).

The GS beta-grasp domain occupies 19 to 102 (SIIEYVWIGG…VICDTYDVNG (84 aa)). Residues 109–353 (HRHNANIIFE…IILQTVCESD (245 aa)) enclose the GS catalytic domain.

It belongs to the glutamine synthetase family.

It carries out the reaction L-glutamate + NH4(+) + ATP = L-glutamine + ADP + phosphate + H(+). This is Putative glutamine synthetase from Acanthamoeba polyphaga (Amoeba).